Consider the following 1295-residue polypeptide: Phosphoribosylformylglycinamidine synthase (1295 aa).

The tract at residues W305–K327 is disordered. ATP contacts are provided by residues G307–D318 and A678. Positions 718, 722, and 884 each coordinate Mg(2+). Residue S886 participates in ATP binding. Positions V1042–G1295 constitute a Glutamine amidotransferase type-1 domain. C1135 functions as the Nucleophile in the catalytic mechanism. Active-site residues include H1260 and E1262.

In the N-terminal section; belongs to the FGAMS family. As to quaternary structure, monomer.

It localises to the cytoplasm. The enzyme catalyses N(2)-formyl-N(1)-(5-phospho-beta-D-ribosyl)glycinamide + L-glutamine + ATP + H2O = 2-formamido-N(1)-(5-O-phospho-beta-D-ribosyl)acetamidine + L-glutamate + ADP + phosphate + H(+). It participates in purine metabolism; IMP biosynthesis via de novo pathway; 5-amino-1-(5-phospho-D-ribosyl)imidazole from N(2)-formyl-N(1)-(5-phospho-D-ribosyl)glycinamide: step 1/2. Its function is as follows. Phosphoribosylformylglycinamidine synthase involved in the purines biosynthetic pathway. Catalyzes the ATP-dependent conversion of formylglycinamide ribonucleotide (FGAR) and glutamine to yield formylglycinamidine ribonucleotide (FGAM) and glutamate. The chain is Phosphoribosylformylglycinamidine synthase from Escherichia coli O6:K15:H31 (strain 536 / UPEC).